A 432-amino-acid chain; its full sequence is Glutamate-1-semialdehyde 2,1-aminomutase (432 aa).

Lysine 272 is subject to N6-(pyridoxal phosphate)lysine.

The protein belongs to the class-III pyridoxal-phosphate-dependent aminotransferase family. HemL subfamily. In terms of assembly, homodimer. Pyridoxal 5'-phosphate is required as a cofactor.

The protein resides in the cytoplasm. It carries out the reaction (S)-4-amino-5-oxopentanoate = 5-aminolevulinate. It functions in the pathway porphyrin-containing compound metabolism; protoporphyrin-IX biosynthesis; 5-aminolevulinate from L-glutamyl-tRNA(Glu): step 2/2. The protein operates within porphyrin-containing compound metabolism; chlorophyll biosynthesis. The protein is Glutamate-1-semialdehyde 2,1-aminomutase of Acaryochloris marina (strain MBIC 11017).